The primary structure comprises 401 residues: Tryptophan synthase beta chain (401 aa).

N6-(pyridoxal phosphate)lysine is present on Lys-88.

This sequence belongs to the TrpB family. In terms of assembly, tetramer of two alpha and two beta chains. Pyridoxal 5'-phosphate serves as cofactor.

It carries out the reaction (1S,2R)-1-C-(indol-3-yl)glycerol 3-phosphate + L-serine = D-glyceraldehyde 3-phosphate + L-tryptophan + H2O. It participates in amino-acid biosynthesis; L-tryptophan biosynthesis; L-tryptophan from chorismate: step 5/5. The beta subunit is responsible for the synthesis of L-tryptophan from indole and L-serine. This Shewanella denitrificans (strain OS217 / ATCC BAA-1090 / DSM 15013) protein is Tryptophan synthase beta chain.